Reading from the N-terminus, the 491-residue chain is Serine/threonine-protein kinase 3/4 (491 aa).

A disordered region spans residues 1 to 24 (MEEVQRRQHPHPRRSLKKLSEDSL). Basic residues predominate over residues 7-17 (RQHPHPRRSLK). The Protein kinase domain occupies 32–283 (FDVLEKLGEG…ATQLLQHPFI (252 aa)). Residues 38–46 (LGEGSYGSV) and Lys-61 contribute to the ATP site. The active-site Proton acceptor is Asp-151. Position 185 is a phosphothreonine; by autocatalysis (Thr-185). A coiled-coil region spans residues 292-334 (LRDLITDMMEIKLKRQEEQQRDLDQDDEENSEEDDMDSGTMVR). Disordered regions lie at residues 307–394 (QEEQ…IQQS) and 406–435 (EKENQANSHSNRNAQALQNSSDNWKVPQDG). The span at 315–328 (DQDDEENSEEDDMD) shows a compositional bias: acidic residues. Polar residues-rich tracts occupy residues 363-373 (TLDSQMGTMVI) and 410-428 (QANSHSNRNAQALQNSSDN). Residues 437–484 (FESLKSWSVEELQRRLASLDPTMEQEIEEIRQRYQAKRQPILDAIDAK) enclose the SARAH domain. The stretch at 442 to 475 (SWSVEELQRRLASLDPTMEQEIEEIRQRYQAKRQ) forms a coiled coil.

Belongs to the protein kinase superfamily. STE Ser/Thr protein kinase family. STE20 subfamily. As to quaternary structure, homodimer; mediated via the coiled-coil region. The cofactor is Mg(2+). Proteolytically cleaved by caspase-3 during apoptosis at Asp-328 resulting in a 37 kDa form. Proteolytic cleavage results in kinase activation and nuclear translocation of the truncated form (MST1/N).

The protein resides in the cytoplasm. It localises to the nucleus. It catalyses the reaction L-seryl-[protein] + ATP = O-phospho-L-seryl-[protein] + ADP + H(+). The catalysed reaction is L-threonyl-[protein] + ATP = O-phospho-L-threonyl-[protein] + ADP + H(+). With respect to regulation, inhibited by the C-terminal non-catalytic region. Activated by caspase-cleavage. Full activation also requires homodimerization and autophosphorylation of Thr-185. Its function is as follows. Stress-activated, pro-apoptotic kinase which, following caspase-cleavage, enters the nucleus and induces chromatin condensation followed by internucleosomal DNA fragmentation. Key component of the Hippo signaling pathway which plays a pivotal role in organ size control and tumor suppression by restricting proliferation and promoting apoptosis. The core of this pathway is composed of a kinase cascade wherein stk3/mst2 and stk4/mst1, in complex with its regulatory protein sav1, phosphorylates and activates lats1/2 in complex with its regulatory protein mob1, which in turn phosphorylates and inactivates yap1 oncoprotein and wwtr1/taz. Phosphorylation of yap1 by lats2 inhibits its translocation into the nucleus to regulate cellular genes important for cell proliferation, cell death, and cell migration. Phosphorylates 'Ser-14' of histone H2B (H2BS14ph) during apoptosis. In Squalus acanthias (Spiny dogfish), this protein is Serine/threonine-protein kinase 3/4 (STK4).